The chain runs to 40 residues: Small polypeptide DEVIL 6 (40 aa).

The required for DVL/RTFL small polypeptide activity stretch occupies residues 9–40; it reads SSSRGLGGVLREQRAKLYIIKRCVVMLLCWQD. The helical transmembrane segment at 12 to 28 threads the bilayer; it reads RGLGGVLREQRAKLYII.

The protein belongs to the DVL/RTFL small polypeptides family.

The protein localises to the cell membrane. Its function is as follows. Small polypeptide acting as a regulatory molecule which coordinates cellular responses required for differentiation, growth and development, probably by restricting polar cell proliferation in lateral organs and coordinating socket cell recruitment and differentiation at trichome sites. This chain is Small polypeptide DEVIL 6, found in Arabidopsis thaliana (Mouse-ear cress).